The following is a 220-amino-acid chain: MQDDRIIRETGAAARVAAIVMPVLDALGYRLVRVRLSAQDGLTLQIMAERPDGTMTVDDCEEVSRAVSPALDVEDPIDSAYQLEISSPGIDRPLVRLSDFQAALGHLAKVETSVMVDGRKRFRGQIVGCTGETLTIERDKVAEGEAPLAEIPLDAISDAKLVLTDALIREALKKDKEERRQRKKARRRGEKGGVGDDGTAGEEQPDSAREGPARSASEGE.

Residues 173–220 (KKDKEERRQRKKARRRGEKGGVGDDGTAGEEQPDSAREGPARSASEGE) are disordered.

Belongs to the RimP family.

The protein localises to the cytoplasm. In terms of biological role, required for maturation of 30S ribosomal subunits. The chain is Ribosome maturation factor RimP from Chelativorans sp. (strain BNC1).